Consider the following 234-residue polypeptide: Leucyl/phenylalanyl-tRNA--protein transferase (234 aa).

The protein belongs to the L/F-transferase family.

It localises to the cytoplasm. It carries out the reaction N-terminal L-lysyl-[protein] + L-leucyl-tRNA(Leu) = N-terminal L-leucyl-L-lysyl-[protein] + tRNA(Leu) + H(+). The catalysed reaction is N-terminal L-arginyl-[protein] + L-leucyl-tRNA(Leu) = N-terminal L-leucyl-L-arginyl-[protein] + tRNA(Leu) + H(+). The enzyme catalyses L-phenylalanyl-tRNA(Phe) + an N-terminal L-alpha-aminoacyl-[protein] = an N-terminal L-phenylalanyl-L-alpha-aminoacyl-[protein] + tRNA(Phe). In terms of biological role, functions in the N-end rule pathway of protein degradation where it conjugates Leu, Phe and, less efficiently, Met from aminoacyl-tRNAs to the N-termini of proteins containing an N-terminal arginine or lysine. This is Leucyl/phenylalanyl-tRNA--protein transferase from Escherichia fergusonii (strain ATCC 35469 / DSM 13698 / CCUG 18766 / IAM 14443 / JCM 21226 / LMG 7866 / NBRC 102419 / NCTC 12128 / CDC 0568-73).